The primary structure comprises 107 residues: MALWIRSLPLLALLVFSGPGTSYAAANQHLCGSHLVEALYLVCGERGFFYSPKARRDVEQPLVSSPLRGEAGVLPFQQEEYEKVKRGIVEQCCHNTCSLYQLENYCN.

The N-terminal stretch at 1-24 is a signal peptide; it reads MALWIRSLPLLALLVFSGPGTSYA. 3 disulfides stabilise this stretch: C31–C93, C43–C106, and C92–C97. The propeptide at 57–84 is c peptide; it reads DVEQPLVSSPLRGEAGVLPFQQEEYEKV.

Belongs to the insulin family. In terms of assembly, heterodimer of a B chain and an A chain linked by two disulfide bonds.

Its subcellular location is the secreted. Its function is as follows. Insulin decreases blood glucose concentration. It increases cell permeability to monosaccharides, amino acids and fatty acids. It accelerates glycolysis, the pentose phosphate cycle, and glycogen synthesis in liver. The polypeptide is Insulin (INS) (Gallus gallus (Chicken)).